A 517-amino-acid polypeptide reads, in one-letter code: 6-phosphogluconate dehydrogenase, decarboxylating (517 aa).

NADP(+)-binding positions include 35-40 (GLAVMG), 58-60 (NRT), 100-102 (VKA), and asparagine 128. Substrate-binding positions include asparagine 128 and 154-156 (SGG). The active-site Proton acceptor is lysine 208. 211–212 (HN) serves as a coordination point for substrate. The active-site Proton donor is glutamate 215. Residues tyrosine 216, lysine 286, arginine 313, arginine 474, and histidine 480 each contribute to the substrate site.

It belongs to the 6-phosphogluconate dehydrogenase family. Homodimer.

The enzyme catalyses 6-phospho-D-gluconate + NADP(+) = D-ribulose 5-phosphate + CO2 + NADPH. The protein operates within carbohydrate degradation; pentose phosphate pathway; D-ribulose 5-phosphate from D-glucose 6-phosphate (oxidative stage): step 3/3. In terms of biological role, catalyzes the oxidative decarboxylation of 6-phosphogluconate to ribulose 5-phosphate and CO(2), with concomitant reduction of NADP to NADPH. The sequence is that of 6-phosphogluconate dehydrogenase, decarboxylating (DOR14) from Candida albicans (Yeast).